Consider the following 268-residue polypeptide: Fc receptor-like protein 6 (268 aa).

Positions 1-16 are cleaved as a signal peptide; it reads MLLWMVLLLCESMAEA. Residues 17-215 are Extracellular-facing; the sequence is QELFPNPELT…TAWIKSNMLP (199 aa). The 81-residue stretch at 114–194 folds into the Ig-like C2-type domain; that stretch reads PVLTLQHEAT…AKNNISREIS (81 aa). Residues C135 and C183 are joined by a disulfide bond. N180 and N188 each carry an N-linked (GlcNAc...) asparagine glycan. A helical transmembrane segment spans residues 216-236; the sequence is IWLPASLLGGMVIAAVVLMYF. The Cytoplasmic portion of the chain corresponds to 237–268; it reads FKPCKKHARPETPTLKEPDSFLYVSVDNQRYK.

As to quaternary structure, interacts with class II MHC.

The protein resides in the cell membrane. Functionally, acts as a MHC class II receptor. When stimulated on its own, does not play a role in cytokine production or the release of cytotoxic granules by NK cells and cytotoxic CD8(+) T cells. Does not act as an Fc receptor. This chain is Fc receptor-like protein 6 (Fcrl6), found in Mus musculus (Mouse).